The chain runs to 375 residues: Aminomethyltransferase (375 aa).

The protein belongs to the GcvT family. As to quaternary structure, the glycine cleavage system is composed of four proteins: P, T, L and H.

The catalysed reaction is N(6)-[(R)-S(8)-aminomethyldihydrolipoyl]-L-lysyl-[protein] + (6S)-5,6,7,8-tetrahydrofolate = N(6)-[(R)-dihydrolipoyl]-L-lysyl-[protein] + (6R)-5,10-methylene-5,6,7,8-tetrahydrofolate + NH4(+). Its function is as follows. The glycine cleavage system catalyzes the degradation of glycine. The chain is Aminomethyltransferase from Cupriavidus taiwanensis (strain DSM 17343 / BCRC 17206 / CCUG 44338 / CIP 107171 / LMG 19424 / R1) (Ralstonia taiwanensis (strain LMG 19424)).